A 349-amino-acid chain; its full sequence is Protein-glutamate methylesterase/protein-glutamine glutaminase (349 aa).

The 118-residue stretch at 5 to 122 (RVLSVDDSAL…REGMLAYSEM (118 aa)) folds into the Response regulatory domain. Asp56 carries the post-translational modification 4-aspartylphosphate. The 193-residue stretch at 152-344 (LLSSEKLIAI…QQMLAKISAG (193 aa)) folds into the CheB-type methylesterase domain. Catalysis depends on residues Ser164, His190, and Asp286.

This sequence belongs to the CheB family. Post-translationally, phosphorylated by CheA. Phosphorylation of the N-terminal regulatory domain activates the methylesterase activity.

It is found in the cytoplasm. It catalyses the reaction [protein]-L-glutamate 5-O-methyl ester + H2O = L-glutamyl-[protein] + methanol + H(+). The catalysed reaction is L-glutaminyl-[protein] + H2O = L-glutamyl-[protein] + NH4(+). Its function is as follows. Involved in chemotaxis. Part of a chemotaxis signal transduction system that modulates chemotaxis in response to various stimuli. Catalyzes the demethylation of specific methylglutamate residues introduced into the chemoreceptors (methyl-accepting chemotaxis proteins or MCP) by CheR. Also mediates the irreversible deamidation of specific glutamine residues to glutamic acid. The chain is Protein-glutamate methylesterase/protein-glutamine glutaminase from Escherichia coli O6:H1 (strain CFT073 / ATCC 700928 / UPEC).